A 409-amino-acid chain; its full sequence is Multifunctional CCA protein (409 aa).

2 residues coordinate ATP: G8 and R11. The CTP site is built by G8 and R11. Mg(2+) is bound by residues D21 and D23. Positions 91, 137, and 140 each coordinate ATP. CTP is bound by residues R91, R137, and R140. Positions 228–329 (TGVHTLSVLE…LELLQSFDVY (102 aa)) constitute an HD domain.

The protein belongs to the tRNA nucleotidyltransferase/poly(A) polymerase family. Bacterial CCA-adding enzyme type 1 subfamily. Monomer. Can also form homodimers and oligomers. Requires Mg(2+) as cofactor. The cofactor is Ni(2+).

The enzyme catalyses a tRNA precursor + 2 CTP + ATP = a tRNA with a 3' CCA end + 3 diphosphate. It carries out the reaction a tRNA with a 3' CCA end + 2 CTP + ATP = a tRNA with a 3' CCACCA end + 3 diphosphate. Functionally, catalyzes the addition and repair of the essential 3'-terminal CCA sequence in tRNAs without using a nucleic acid template. Adds these three nucleotides in the order of C, C, and A to the tRNA nucleotide-73, using CTP and ATP as substrates and producing inorganic pyrophosphate. tRNA 3'-terminal CCA addition is required both for tRNA processing and repair. Also involved in tRNA surveillance by mediating tandem CCA addition to generate a CCACCA at the 3' terminus of unstable tRNAs. While stable tRNAs receive only 3'-terminal CCA, unstable tRNAs are marked with CCACCA and rapidly degraded. This chain is Multifunctional CCA protein, found in Pseudomonas fluorescens (strain SBW25).